The primary structure comprises 791 residues: Ataxin-2 homolog (791 aa).

Positions 1-22 are enriched in polar residues; sequence MATRSVSMKQTSQRAASPNKTQ. Disordered stretches follow at residues 1–28, 60–100, 112–134, 235–311, 326–423, 452–505, 613–634, and 707–791; these read MATR…KKWS, RGGV…QQRV, RTET…GVPL, TRSN…KEGQ, SLDS…TKLG, KPAP…PVSS, NPSQ…GNSS, and PMYG…EAKP. The segment covering 76 to 96 has biased composition (low complexity); it reads SLASSEENVSSVSGSAKSNNS. 2 stretches are compositionally biased toward basic and acidic residues: residues 112-125 and 243-256; these read RTET…RWMP and NNKD…EAPH. Polar residues predominate over residues 326 to 337; that stretch reads SLDSKQPSSTKS. 2 stretches are compositionally biased toward basic and acidic residues: residues 360 to 371 and 395 to 418; these read DSKEPRKEEAEK and SKEE…KETT. Residues 473 to 486 are compositionally biased toward low complexity; sequence SIPSTTPQSPSVVS. The segment covering 487-497 has biased composition (polar residues); it reads NGENKPSSSPV. Composition is skewed to low complexity over residues 715–725 and 734–760; these read SNSQRSFNSSN and NNNA…NTTA. Positions 774 to 791 are enriched in basic and acidic residues; sequence DATEKTEKDASANQEAKP.

It belongs to the ataxin-2 family. As to quaternary structure, interacts with mkt1.

It localises to the cytoplasm. Functionally, involved in post-transcriptional regulation of gene expression, probably by association with mkt1. The protein is Ataxin-2 homolog of Schizosaccharomyces pombe (strain 972 / ATCC 24843) (Fission yeast).